A 286-amino-acid polypeptide reads, in one-letter code: uncharacterized protein (286 aa).

2 disordered regions span residues 59 to 89 (PESAPGKPGCAEAESAGTAAATESHGAPGAK) and 225 to 286 (RQRK…EDTR). The span at 69–85 (AEAESAGTAAATESHGA) shows a compositional bias: low complexity.

This is an uncharacterized protein from Mus musculus (Mouse).